The chain runs to 579 residues: Lens epithelium-derived growth factor (579 aa).

The PWWP domain maps to 1–64; the sequence is MSRDFKPGDL…PKDIFPYSEN (64 aa). Disordered regions lie at residues 62–81, 88–203, 215–397, and 492–579; these read SENK…NEGL, PKVK…EEAA, AAPV…SMDS, and AEQK…FENK. Positions 94 to 107 are enriched in polar residues; sequence HQPSHPAVNTSIKE. A compositionally biased stretch (basic and acidic residues) spans 153 to 173; the sequence is KEMHSTKEDEEPSEKNSKEGV. Positions 184-193 are enriched in basic residues; sequence VARRGRKRKA. A Nuclear localization signal motif is present at residues 186–196; that stretch reads RRGRKRKAEKQ. Residues 215–224 show a composition bias toward low complexity; sequence AAPVTVSPKV. Residues 261–308 are compositionally biased toward basic and acidic residues; sequence EEEKAKKKGPDEKPKKQGKKDEEGQKEEEKPKKEYDKKDGKKEAEPKR. Residues 321 to 330 show a composition bias toward acidic residues; sequence DSEDEGGEEE. Over residues 334–349 the composition is skewed to basic residues; it reads KKKGGRSFQSTHRRNI. A coiled-coil region spans residues 347–442; that stretch reads RNIMRGQHEK…SMQQAQKHTE (96 aa). Composition is skewed to basic and acidic residues over residues 352-397 and 492-522; these read GQHE…SMDS and AEQK…KDQT. The integrase-binding domain (IBD) stretch occupies residues 387–464; that stretch reads MEKKRETSMD…VSQVIMEKST (78 aa). Over residues 530 to 543 the composition is skewed to polar residues; it reads GSETQDTNQSQHNG. Positions 544 to 579 are enriched in basic and acidic residues; that stretch reads ENAEEKDKLEVASKKKTCGEESELEKPAKESAFENK.

The protein belongs to the HDGF family.

It localises to the nucleus. Transcriptional coactivator involved in neuroepithelial stem cell differentiation and neurogenesis. Involved in particular in lens epithelial cell gene regulation and stress responses. May play an important role in lens epithelial to fiber cell terminal differentiation. May play a protective role during stress-induced apoptosis. This Gallus gallus (Chicken) protein is Lens epithelium-derived growth factor (PSIP1).